The primary structure comprises 2640 residues: Collagen alpha-5(VI) chain (2640 aa).

The first 18 residues, 1–18 (MKLRLIAFVLILWTETLA), serve as a signal peptide directing secretion. A nonhelical region region spans residues 19–1426 (DQSPGPGPEY…ACCCTFCKCP (1408 aa)). 7 consecutive VWFA domains span residues 30–209 (DVVF…IKDV), 268–445 (DLIF…LKKI), 474–644 (DIYF…KNEI), 660–829 (DIMF…ESKL), 846–1023 (DIVF…QETL), 1037–1214 (DVIF…VREI), and 1226–1413 (DVVV…LGNI). Asn-201, Asn-292, and Asn-614 each carry an N-linked (GlcNAc...) asparagine glycan. Collagen-like domains are found at residues 1426–1478 (PGIP…GCPG), 1474–1524 (VGCP…DPGN), 1557–1614 (GQKG…GPEG), 1632–1689 (GSQG…GIPG), and 1706–1762 (GDPG…AGQP). The interval 1427-1760 (GIPGPHGTRG…GRRGPKGTAG (334 aa)) is triple-helical region. The tract at residues 1435–1761 (RGLQASKGSS…RRGPKGTAGQ (327 aa)) is disordered. The span at 1452 to 1464 (HRGEDGDPGRRGE) shows a compositional bias: basic and acidic residues. The segment covering 1537–1567 (DGEKGFPGDPGDPGKDSNIKGQKGEKGERGR) has biased composition (basic and acidic residues). The segment covering 1597–1609 (PSGQAGNPGPQGT) has biased composition (polar residues). Over residues 1610–1622 (QGPEGLQGSQGSS) the composition is skewed to low complexity. Positions 1649–1651 (RGD) match the Cell attachment site motif. The span at 1718–1727 (GIPGGPGPKG) shows a compositional bias: gly residues. A compositionally biased stretch (low complexity) spans 1740-1750 (RSGLQGSQGPP). The interval 1761 to 2640 (QPIYSPCELI…NSKQDGEDAR (880 aa)) is nonhelical region. VWFA domains follow at residues 1790–1970 (ELVF…KLRR) and 1996–2186 (DVAF…VKFL). 2 short sequence motifs (cell attachment site) span residues 2216 to 2218 (RGD) and 2259 to 2261 (RGD). A VWFA 10 domain is found at 2321 to 2516 (DVAFLIDASQ…PDLDYVIKFI (196 aa)). N-linked (GlcNAc...) asparagine glycosylation is present at Asn-2541. Positions 2617 to 2640 (DKEEPCSAETPAPVNSKQDGEDAR) are disordered.

Belongs to the type VI collagen family. As to quaternary structure, trimers composed of three different chains: alpha-1(VI), alpha-2(VI), and alpha-3(VI) or alpha-4(VI) or alpha-5(VI) or alpha-6(VI). In terms of processing, prolines at the third position of the tripeptide repeating unit (G-X-Y) are hydroxylated in some or all of the chains. In terms of tissue distribution, in newborn, it is expressed in lung, heart, kidney, muscle, brain, intestine, skin, femur, sternum and calvaria. In adult, it is widely expressed and is detected in lung, heart, kidney, spleen, muscle, ovary, uterus, brain, skin, liver and sternum.

The protein resides in the secreted. It localises to the extracellular space. The protein localises to the extracellular matrix. In terms of biological role, collagen VI acts as a cell-binding protein. This Mus musculus (Mouse) protein is Collagen alpha-5(VI) chain (Col6a5).